Consider the following 213-residue polypeptide: Proton-translocating ferredoxin:NAD(+) oxidoreductase complex subunit E (213 aa).

A run of 6 helical transmembrane segments spans residues 11–31 (GLIA…ALAT), 39–59 (FTMG…VSII), 69–89 (VPVY…VMQA), 93–113 (LLYK…IILA), 128–148 (FFDG…IGMI), and 170–190 (ALIM…VAIV).

Belongs to the NqrDE/RnfAE family. The complex is composed of six subunits: RnfA, RnfB, RnfC, RnfD, RnfE and RnfG.

The protein resides in the cell membrane. Its function is as follows. Part of a membrane-bound complex that couples electron transfer with translocation of ions across the membrane. Couples electron transfer from reduced ferredoxin to NAD(+) with translocation of H(+) out of the cell. Essential for energy conservation during autotrophic growth. Contributes to ATP synthesis during heterotrophic growth. The polypeptide is Proton-translocating ferredoxin:NAD(+) oxidoreductase complex subunit E (Clostridium ljungdahlii (strain ATCC 55383 / DSM 13528 / PETC)).